The chain runs to 303 residues: Acetaldehyde dehydrogenase (303 aa).

Cys130 acts as the Acyl-thioester intermediate in catalysis. NAD(+)-binding positions include 161 to 169 (SVGPGTRKN) and Asn272.

It belongs to the acetaldehyde dehydrogenase family.

It catalyses the reaction acetaldehyde + NAD(+) + CoA = acetyl-CoA + NADH + H(+). This Verminephrobacter eiseniae (strain EF01-2) protein is Acetaldehyde dehydrogenase.